A 469-amino-acid polypeptide reads, in one-letter code: Cysteine--tRNA ligase (469 aa).

A Zn(2+)-binding site is contributed by Cys-33. The 'HIGH' region signature appears at 35–45; sequence ATVQGLPHIGH. Residues Cys-211, His-236, and Glu-240 each contribute to the Zn(2+) site. Positions 267 to 271 match the 'KMSKS' region motif; sequence KMSKS. Residue Lys-270 participates in ATP binding.

Belongs to the class-I aminoacyl-tRNA synthetase family. As to quaternary structure, monomer. Zn(2+) is required as a cofactor.

It is found in the cytoplasm. The enzyme catalyses tRNA(Cys) + L-cysteine + ATP = L-cysteinyl-tRNA(Cys) + AMP + diphosphate. This Mycobacterium bovis (strain ATCC BAA-935 / AF2122/97) protein is Cysteine--tRNA ligase (cysS).